Consider the following 128-residue polypeptide: Sulfurtransferase TusD (128 aa).

Residue Cys78 is the Cysteine persulfide intermediate of the active site.

It belongs to the DsrE/TusD family. In terms of assembly, heterohexamer, formed by a dimer of trimers. The hexameric TusBCD complex contains 2 copies each of TusB, TusC and TusD. The TusBCD complex interacts with TusE.

The protein resides in the cytoplasm. Part of a sulfur-relay system required for 2-thiolation of 5-methylaminomethyl-2-thiouridine (mnm(5)s(2)U) at tRNA wobble positions. Accepts sulfur from TusA and transfers it in turn to TusE. The polypeptide is Sulfurtransferase TusD (Escherichia coli O7:K1 (strain IAI39 / ExPEC)).